The following is a 28-amino-acid chain: Ranatuerin-2SEc (28 aa).

An intrachain disulfide couples C23 to C28.

In terms of tissue distribution, expressed by the skin glands.

Its subcellular location is the secreted. Its function is as follows. Mast cell degranulating peptide. Causes histamine release from rat peritoneal mast cells in vitro. Has antibacterial activity against the Gram-negative bacterium E.coli K12 and Gram-positive bacterium M.luteus NCT C2665. This is Ranatuerin-2SEc from Lithobates sevosus (Dusky gopher frog).